A 228-amino-acid polypeptide reads, in one-letter code: Phosphoglycolate phosphatase (228 aa).

Asp12 serves as the catalytic Nucleophile. Mg(2+)-binding residues include Asp12, Asp14, and Asp177.

The protein belongs to the HAD-like hydrolase superfamily. CbbY/CbbZ/Gph/YieH family. The cofactor is Mg(2+).

It carries out the reaction 2-phosphoglycolate + H2O = glycolate + phosphate. It functions in the pathway organic acid metabolism; glycolate biosynthesis; glycolate from 2-phosphoglycolate: step 1/1. In terms of biological role, specifically catalyzes the dephosphorylation of 2-phosphoglycolate. Is involved in the dissimilation of the intracellular 2-phosphoglycolate formed during the DNA repair of 3'-phosphoglycolate ends, a major class of DNA lesions induced by oxidative stress. The chain is Phosphoglycolate phosphatase from Vibrio vulnificus (strain YJ016).